A 366-amino-acid polypeptide reads, in one-letter code: Chorismate synthase (366 aa).

Arg48 and Arg54 together coordinate NADP(+). FMN-binding positions include Arg125 to Ser127, Asn238 to Ala239, Gly278, Lys293 to Ser297, and Arg319.

This sequence belongs to the chorismate synthase family. In terms of assembly, homotetramer. Requires FMNH2 as cofactor.

It catalyses the reaction 5-O-(1-carboxyvinyl)-3-phosphoshikimate = chorismate + phosphate. It functions in the pathway metabolic intermediate biosynthesis; chorismate biosynthesis; chorismate from D-erythrose 4-phosphate and phosphoenolpyruvate: step 7/7. Functionally, catalyzes the anti-1,4-elimination of the C-3 phosphate and the C-6 proR hydrogen from 5-enolpyruvylshikimate-3-phosphate (EPSP) to yield chorismate, which is the branch point compound that serves as the starting substrate for the three terminal pathways of aromatic amino acid biosynthesis. This reaction introduces a second double bond into the aromatic ring system. The sequence is that of Chorismate synthase from Dechloromonas aromatica (strain RCB).